The following is a 317-amino-acid chain: Melanocyte-stimulating hormone receptor (317 aa).

Residues methionine 1–glutamate 37 lie on the Extracellular side of the membrane. Asparagine 29 is a glycosylation site (N-linked (GlcNAc...) asparagine). The helical transmembrane segment at valine 38–isoleucine 63 threads the bilayer. At alanine 64 to proline 72 the chain is on the cytoplasmic side. The helical transmembrane segment at methionine 73–leucine 93 threads the bilayer. At glutamate 94–asparagine 118 the chain is on the extracellular side. The helical transmembrane segment at threonine 119–valine 140 threads the bilayer. Residues aspartate 141–arginine 163 are Cytoplasmic-facing. The helical transmembrane segment at valine 164–tyrosine 183 threads the bilayer. Topologically, residues aspartate 184–cysteine 191 are extracellular. The helical transmembrane segment at leucine 192–leucine 211 threads the bilayer. The Cytoplasmic portion of the chain corresponds to alanine 212 to alanine 240. Residues alanine 241–phenylalanine 266 form a helical membrane-spanning segment. Residues cysteine 267–asparagine 279 lie on the Extracellular side of the membrane. Residues phenylalanine 280 to phenylalanine 300 traverse the membrane as a helical segment. The Cytoplasmic portion of the chain corresponds to arginine 301–tryptophan 317. Cysteine 315 is lipidated: S-palmitoyl cysteine.

Belongs to the G-protein coupled receptor 1 family. In terms of assembly, interacts with MGRN1, but does not undergo MGRN1-mediated ubiquitination; this interaction competes with GNAS-binding and thus inhibits agonist-induced cAMP production. Interacts with OPN3; the interaction results in a decrease in MC1R-mediated cAMP signaling and ultimately a decrease in melanin production in melanocytes.

The protein localises to the cell membrane. Functionally, receptor for MSH (alpha, beta and gamma) and ACTH. The activity of this receptor is mediated by G proteins which activate adenylate cyclase. Mediates melanogenesis, the production of eumelanin (black/brown) and phaeomelanin (red/yellow), via regulation of cAMP signaling in melanocytes. In Saimiri oerstedii (Central American squirrel monkey), this protein is Melanocyte-stimulating hormone receptor (MC1R).